We begin with the raw amino-acid sequence, 287 residues long: uncharacterized protein (287 aa).

Disordered regions lie at residues Q109–D175, I203–V223, and K257–E287. Low complexity predominate over residues E110 to P136. Over residues R143–K152 the composition is skewed to basic and acidic residues. The span at E153–N162 shows a compositional bias: basic residues. Over residues S273–E287 the composition is skewed to basic and acidic residues.

Belongs to the chlamydial CPn_0623/CT_504/TC_0791 family.

This is an uncharacterized protein from Chlamydia muridarum (strain MoPn / Nigg).